A 304-amino-acid chain; its full sequence is Acetylglutamate kinase (304 aa).

Substrate is bound by residues 69–70 (GG), Arg91, and Asn202.

It belongs to the acetylglutamate kinase family. ArgB subfamily.

The protein localises to the cytoplasm. It carries out the reaction N-acetyl-L-glutamate + ATP = N-acetyl-L-glutamyl 5-phosphate + ADP. Its pathway is amino-acid biosynthesis; L-arginine biosynthesis; N(2)-acetyl-L-ornithine from L-glutamate: step 2/4. Functionally, catalyzes the ATP-dependent phosphorylation of N-acetyl-L-glutamate. This Caulobacter sp. (strain K31) protein is Acetylglutamate kinase.